Reading from the N-terminus, the 232-residue chain is UPF0758 protein Amet_2289 (232 aa).

Residues 110–232 enclose the MPN domain; that stretch reads RIKSPDDVSN…YYSLKEKSMM (123 aa). The Zn(2+) site is built by His-181, His-183, and Asp-194. The JAMM motif motif lies at 181–194; sequence HNHPSGDPSPSGED.

It belongs to the UPF0758 family.

This chain is UPF0758 protein Amet_2289, found in Alkaliphilus metalliredigens (strain QYMF).